The primary structure comprises 77 residues: Translation initiation factor IF-1, chloroplastic (77 aa).

The region spanning 1-71 (MKEQKWIHEG…TRGRIIYRLR (71 aa)) is the S1-like domain.

This sequence belongs to the IF-1 family. As to quaternary structure, component of the 30S ribosomal translation pre-initiation complex which assembles on the 30S ribosome in the order IF-2 and IF-3, IF-1 and N-formylmethionyl-tRNA(fMet); mRNA recruitment can occur at any time during PIC assembly.

It is found in the plastid. The protein resides in the chloroplast. One of the essential components for the initiation of protein synthesis. Stabilizes the binding of IF-2 and IF-3 on the 30S subunit to which N-formylmethionyl-tRNA(fMet) subsequently binds. Helps modulate mRNA selection, yielding the 30S pre-initiation complex (PIC). Upon addition of the 50S ribosomal subunit IF-1, IF-2 and IF-3 are released leaving the mature 70S translation initiation complex. The sequence is that of Translation initiation factor IF-1, chloroplastic from Hedera helix (English ivy).